The following is a 72-amino-acid chain: Translation initiation factor IF-1 1 (72 aa).

Residues 1-72 (MAKDDVIQMQ…SRARIVFRAK (72 aa)) form the S1-like domain.

The protein belongs to the IF-1 family. Component of the 30S ribosomal translation pre-initiation complex which assembles on the 30S ribosome in the order IF-2 and IF-3, IF-1 and N-formylmethionyl-tRNA(fMet); mRNA recruitment can occur at any time during PIC assembly.

It is found in the cytoplasm. Its function is as follows. One of the essential components for the initiation of protein synthesis. Stabilizes the binding of IF-2 and IF-3 on the 30S subunit to which N-formylmethionyl-tRNA(fMet) subsequently binds. Helps modulate mRNA selection, yielding the 30S pre-initiation complex (PIC). Upon addition of the 50S ribosomal subunit IF-1, IF-2 and IF-3 are released leaving the mature 70S translation initiation complex. This is Translation initiation factor IF-1 1 from Ralstonia nicotianae (strain ATCC BAA-1114 / GMI1000) (Ralstonia solanacearum).